A 141-amino-acid polypeptide reads, in one-letter code: Hemoglobin subunit alpha (141 aa).

The 141-residue stretch at 1 to 141 folds into the Globin domain; sequence VLSASDKTNL…VSTVLTSKYR (141 aa). The residue at position 3 (Ser-3) is a Phosphoserine. Lys-7 bears the N6-succinyllysine mark. Thr-8 carries the phosphothreonine modification. An N6-succinyllysine modification is found at Lys-11. The residue at position 16 (Lys-16) is an N6-acetyllysine; alternate. Lys-16 is modified (N6-succinyllysine; alternate). Tyr-24 is subject to Phosphotyrosine. Ser-35 carries the post-translational modification Phosphoserine. An N6-succinyllysine modification is found at Lys-40. Ser-49 is subject to Phosphoserine. O2 is bound at residue His-58. His-87 serves as a coordination point for heme b. Position 102 is a phosphoserine (Ser-102). Thr-108 bears the Phosphothreonine mark. At Ser-124 the chain carries Phosphoserine. 2 positions are modified to phosphothreonine: Thr-134 and Thr-137. Ser-138 bears the Phosphoserine mark.

This sequence belongs to the globin family. As to quaternary structure, heterotetramer of two alpha chains and two beta chains. As to expression, red blood cells.

Functionally, involved in oxygen transport from the lung to the various peripheral tissues. The protein is Hemoglobin subunit alpha of Blarina brevicauda (Northern short-tailed shrew).